The primary structure comprises 170 residues: Adenine phosphoribosyltransferase (170 aa).

Belongs to the purine/pyrimidine phosphoribosyltransferase family. Homodimer.

The protein resides in the cytoplasm. The enzyme catalyses AMP + diphosphate = 5-phospho-alpha-D-ribose 1-diphosphate + adenine. The protein operates within purine metabolism; AMP biosynthesis via salvage pathway; AMP from adenine: step 1/1. Its function is as follows. Catalyzes a salvage reaction resulting in the formation of AMP, that is energically less costly than de novo synthesis. This chain is Adenine phosphoribosyltransferase, found in Geobacillus sp. (strain WCH70).